Consider the following 357-residue polypeptide: 4-hydroxy-3-methylbut-2-en-1-yl diphosphate synthase (flavodoxin) (357 aa).

Positions 264, 267, 299, and 306 each coordinate [4Fe-4S] cluster.

Belongs to the IspG family. It depends on [4Fe-4S] cluster as a cofactor.

The enzyme catalyses (2E)-4-hydroxy-3-methylbut-2-enyl diphosphate + oxidized [flavodoxin] + H2O + 2 H(+) = 2-C-methyl-D-erythritol 2,4-cyclic diphosphate + reduced [flavodoxin]. Its pathway is isoprenoid biosynthesis; isopentenyl diphosphate biosynthesis via DXP pathway; isopentenyl diphosphate from 1-deoxy-D-xylulose 5-phosphate: step 5/6. Converts 2C-methyl-D-erythritol 2,4-cyclodiphosphate (ME-2,4cPP) into 1-hydroxy-2-methyl-2-(E)-butenyl 4-diphosphate. In Campylobacter jejuni (strain RM1221), this protein is 4-hydroxy-3-methylbut-2-en-1-yl diphosphate synthase (flavodoxin).